The chain runs to 209 residues: Orotate phosphoribosyltransferase (209 aa).

5-phospho-alpha-D-ribose 1-diphosphate is bound by residues Arg-96, Lys-100, His-102, and 122–130; that span reads EDLISTGGS. Orotate is bound at residue Ser-126.

The protein belongs to the purine/pyrimidine phosphoribosyltransferase family. PyrE subfamily. Homodimer. Requires Mg(2+) as cofactor.

It carries out the reaction orotidine 5'-phosphate + diphosphate = orotate + 5-phospho-alpha-D-ribose 1-diphosphate. Its pathway is pyrimidine metabolism; UMP biosynthesis via de novo pathway; UMP from orotate: step 1/2. Catalyzes the transfer of a ribosyl phosphate group from 5-phosphoribose 1-diphosphate to orotate, leading to the formation of orotidine monophosphate (OMP). The sequence is that of Orotate phosphoribosyltransferase from Streptococcus agalactiae serotype Ia (strain ATCC 27591 / A909 / CDC SS700).